Here is a 142-residue protein sequence, read N- to C-terminus: Large ribosomal subunit protein uL13 (142 aa).

Belongs to the universal ribosomal protein uL13 family. In terms of assembly, part of the 50S ribosomal subunit.

This protein is one of the early assembly proteins of the 50S ribosomal subunit, although it is not seen to bind rRNA by itself. It is important during the early stages of 50S assembly. In Histophilus somni (strain 2336) (Haemophilus somnus), this protein is Large ribosomal subunit protein uL13.